The sequence spans 858 residues: Ubiquitin carboxyl-terminal hydrolase 13 (858 aa).

S112 is modified (phosphoserine). The UBP-type; degenerate zinc finger occupies 185 to 293; sequence PVSKYANNLV…KHLAHFGIDM (109 aa). Residues C209, C212, C229, and H242 each contribute to the Zn(2+) site. A Glycyl lysine isopeptide (Lys-Gly) (interchain with G-Cter in SUMO2) cross-link involves residue K309. The 523-residue stretch at 334 to 856 folds into the USP domain; the sequence is TGLKNLGNSC…LGYMYFYRRI (523 aa). The active-site Nucleophile is C343. K403 is covalently cross-linked (Glycyl lysine isopeptide (Lys-Gly) (interchain with G-Cter in SUMO2)). UBA domains lie at 650–691 and 722–762; these read DIDE…IIVH and QPPE…IFSH. H818 serves as the catalytic Proton acceptor.

This sequence belongs to the peptidase C19 family. In terms of assembly, interacts with UFD1. Interacts (via UBA domains) with SIAH2 (when ubiquitinated). Interacts with BAG6; the interaction is direct and may mediate UBL4A deubiquitination. Interacts (via UBA 2 domain) with AMFR; the interaction is direct. Interacts with UBL4A; may be indirect via BAG6. Interacts with NEDD4.

It localises to the cytoplasm. It catalyses the reaction Thiol-dependent hydrolysis of ester, thioester, amide, peptide and isopeptide bonds formed by the C-terminal Gly of ubiquitin (a 76-residue protein attached to proteins as an intracellular targeting signal).. With respect to regulation, specifically inhibited by spautin-1 (specific and potent autophagy inhibitor-1), a derivative of MBCQ that binds to USP13 and inhibits deubiquitinase activity. Regulated by PIK3C3/VPS34-containing complexes. The weak deubiquitinase activity in vitro suggests the existence of some mechanism that activates the enzyme. In terms of biological role, deubiquitinase that mediates deubiquitination of target proteins such as BECN1, MITF, SKP2 and USP10 and is involved in various processes such as autophagy, endoplasmic reticulum-associated degradation (ERAD), cell cycle progression or DNA damage response. Component of a regulatory loop that controls autophagy and p53/TP53 levels: mediates deubiquitination of BECN1, a key regulator of autophagy, leading to stabilize the PIK3C3/VPS34-containing complexes. Alternatively, forms with NEDD4 a deubiquitination complex, which subsequently stabilizes VPS34 to promote autophagy. Also deubiquitinates USP10, an essential regulator of p53/TP53 stability. In turn, PIK3C3/VPS34-containing complexes regulate USP13 stability, suggesting the existence of a regulatory system by which PIK3C3/VPS34-containing complexes regulate p53/TP53 protein levels via USP10 and USP13. Recruited by nuclear UFD1 and mediates deubiquitination of SKP2, thereby regulating endoplasmic reticulum-associated degradation (ERAD). Also regulates ERAD through the deubiquitination of UBL4A a component of the BAG6/BAT3 complex. Mediates stabilization of SIAH2 independently of deubiquitinase activity: binds ubiquitinated SIAH2 and acts by impairing SIAH2 autoubiquitination. Regulates the cell cycle progression by stabilizing cell cycle proteins such as SKP2 and AURKB. In addition, plays an important role in maintaining genomic stability and in DNA replication checkpoint activation via regulation of RAP80 and TOPBP1. Deubiquitinates the multifunctional protein HMGB1 and subsequently drives its nucleocytoplasmic localization and its secretion. Positively regulates type I and type II interferon signalings by deubiquitinating STAT1 but negatively regulates antiviral response by deubiquitinating STING1. The polypeptide is Ubiquitin carboxyl-terminal hydrolase 13 (Usp13) (Mus musculus (Mouse)).